The primary structure comprises 222 residues: 3-demethoxyubiquinol 3-hydroxylase (222 aa).

Residues Glu71, Glu101, His104, Glu153, Glu185, and His188 each contribute to the Fe cation site.

It belongs to the COQ7 family. It depends on Fe cation as a cofactor.

The protein resides in the cell membrane. It carries out the reaction a 5-methoxy-2-methyl-3-(all-trans-polyprenyl)benzene-1,4-diol + AH2 + O2 = a 3-demethylubiquinol + A + H2O. It functions in the pathway cofactor biosynthesis; ubiquinone biosynthesis. Catalyzes the hydroxylation of 2-nonaprenyl-3-methyl-6-methoxy-1,4-benzoquinol during ubiquinone biosynthesis. The polypeptide is 3-demethoxyubiquinol 3-hydroxylase (Bordetella bronchiseptica (strain ATCC BAA-588 / NCTC 13252 / RB50) (Alcaligenes bronchisepticus)).